Consider the following 261-residue polypeptide: MPQNEYIEKHIKQHGRRLDHEERKRKRAAREGHRVAKDAQTLKGWRGKQFAKQRYSEKVAMKKKIKAHQESKVKGPSTPKENDGEALPTYLLDRKDTNTAKAISSSIKQKRMEKADKFSVPLPKVKGISEEEMFKVIKTGKSKTKSWKRMITKHTFVGEGFTRRPVKMERIIRPSALRQKKANVTHPELGVTVFLPILGVKKNPQSPMYTQLGVLTKGTIIEVNVSELGLVTAGGKVVWGKYAQITNEPDRDGCVNAVLLV.

Over residues Met-1–Glu-22 the composition is skewed to basic and acidic residues. Disordered stretches follow at residues Met-1 to Ala-39 and Met-61 to Glu-85. A Nuclear localization signal motif is present at residues Gly-15–Glu-22.

Belongs to the eukaryotic ribosomal protein eS8 family. Ribosome biogenesis protein NSA2 subfamily. Component of the pre-66S ribosomal particle. Interacts with NOP7 and RRP1. Interacts with RSA4 (via WD repeats).

The protein localises to the nucleus. The protein resides in the nucleolus. Functionally, involved in the biogenesis of the 60S ribosomal subunit. May play a part in the quality control of pre-60S particles. This is Ribosome biogenesis protein NSA2 (NSA2) from Meyerozyma guilliermondii (strain ATCC 6260 / CBS 566 / DSM 6381 / JCM 1539 / NBRC 10279 / NRRL Y-324) (Yeast).